Here is a 415-residue protein sequence, read N- to C-terminus: uncharacterized protein (415 aa).

Residues Cys-85, Cys-91, Cys-94, and Cys-175 each coordinate [4Fe-4S] cluster. S-adenosyl-L-methionine is bound by residues Gln-248, Tyr-276, Glu-297, and Asn-344. Cys-371 acts as the Nucleophile in catalysis.

Belongs to the class I-like SAM-binding methyltransferase superfamily. RNA M5U methyltransferase family.

This is an uncharacterized protein from Leptospira interrogans serogroup Icterohaemorrhagiae serovar Lai (strain 56601).